Here is a 79-residue protein sequence, read N- to C-terminus: Small ribosomal subunit protein bS18 (79 aa).

It belongs to the bacterial ribosomal protein bS18 family. Part of the 30S ribosomal subunit. Forms a tight heterodimer with protein bS6.

Binds as a heterodimer with protein bS6 to the central domain of the 16S rRNA, where it helps stabilize the platform of the 30S subunit. In Streptococcus thermophilus (strain CNRZ 1066), this protein is Small ribosomal subunit protein bS18.